We begin with the raw amino-acid sequence, 565 residues long: Dihydroxy-acid dehydratase (565 aa).

A [2Fe-2S] cluster-binding site is contributed by Cys-53. Mg(2+) is bound at residue Asp-85. Cys-126 provides a ligand contact to [2Fe-2S] cluster. 2 residues coordinate Mg(2+): Asp-127 and Lys-128. N6-carboxylysine is present on Lys-128. Position 198 (Cys-198) interacts with [2Fe-2S] cluster. Residue Glu-450 coordinates Mg(2+). Ser-476 acts as the Proton acceptor in catalysis.

This sequence belongs to the IlvD/Edd family. As to quaternary structure, homodimer. It depends on [2Fe-2S] cluster as a cofactor. Requires Mg(2+) as cofactor.

The catalysed reaction is (2R)-2,3-dihydroxy-3-methylbutanoate = 3-methyl-2-oxobutanoate + H2O. The enzyme catalyses (2R,3R)-2,3-dihydroxy-3-methylpentanoate = (S)-3-methyl-2-oxopentanoate + H2O. It functions in the pathway amino-acid biosynthesis; L-isoleucine biosynthesis; L-isoleucine from 2-oxobutanoate: step 3/4. Its pathway is amino-acid biosynthesis; L-valine biosynthesis; L-valine from pyruvate: step 3/4. Its function is as follows. Functions in the biosynthesis of branched-chain amino acids. Catalyzes the dehydration of (2R,3R)-2,3-dihydroxy-3-methylpentanoate (2,3-dihydroxy-3-methylvalerate) into 2-oxo-3-methylpentanoate (2-oxo-3-methylvalerate) and of (2R)-2,3-dihydroxy-3-methylbutanoate (2,3-dihydroxyisovalerate) into 2-oxo-3-methylbutanoate (2-oxoisovalerate), the penultimate precursor to L-isoleucine and L-valine, respectively. The sequence is that of Dihydroxy-acid dehydratase from Synechococcus sp. (strain JA-2-3B'a(2-13)) (Cyanobacteria bacterium Yellowstone B-Prime).